A 300-amino-acid chain; its full sequence is Protein N-terminal and lysine N-methyltransferase EFM7 (300 aa).

Residues tryptophan 75, 101-103 (GAG), aspartate 123, tryptophan 156, and serine 179 contribute to the S-adenosyl-L-methionine site.

It belongs to the class I-like SAM-binding methyltransferase superfamily. EFM7 family.

Its subcellular location is the cytoplasm. S-adenosyl-L-methionine-dependent protein methyltransferase that trimethylates the N-terminal glycine 'Gly-2' of elongation factor 1-alpha, before also catalyzing the mono- and dimethylation of 'Lys-3'. This chain is Protein N-terminal and lysine N-methyltransferase EFM7, found in Cryptococcus neoformans var. neoformans serotype D (strain JEC21 / ATCC MYA-565) (Filobasidiella neoformans).